Reading from the N-terminus, the 670-residue chain is FAD-binding monooxygenase ausC (670 aa).

Residues 144 to 147 (TWYW), 156 to 157 (DT), and Y162 contribute to the FAD site. 154–156 (MCD) is a binding site for NADP(+). NADP(+)-binding positions include 299–305 (TGASAVQ) and 322–323 (RT).

Belongs to the FAD-binding monooxygenase family. Requires FAD as cofactor.

It carries out the reaction preaustinoid A + AH2 + O2 = preaustinoid A1 + A + H2O. The protein operates within secondary metabolite biosynthesis; terpenoid biosynthesis. In terms of biological role, FAD-binding monooxygenase; part of the gene cluster that mediates the biosynthesis of calidodehydroaustin, a fungal meroterpenoid. The first step of the pathway is the synthesis of 3,5-dimethylorsellinic acid by the polyketide synthase ausA. 3,5-dimethylorsellinic acid is then prenylated by the polyprenyl transferase ausN. Further epoxidation by the FAD-dependent monooxygenase ausM and cyclization by the probable terpene cyclase ausL lead to the formation of protoaustinoid A. Protoaustinoid A is then oxidized to spiro-lactone preaustinoid A3 by the combined action of the FAD-binding monooxygenases ausB and ausC, and the dioxygenase ausE. Acid-catalyzed keto-rearrangement and ring contraction of the tetraketide portion of preaustinoid A3 by ausJ lead to the formation of preaustinoid A4. The aldo-keto reductase ausK, with the help of ausH, is involved in the next step by transforming preaustinoid A4 into isoaustinone which is in turn hydroxylated by the P450 monooxygenase ausI to form austinolide. The cytochrome P450 monooxygenase ausG modifies austinolide to austinol. Austinol is further acetylated to austin by the O-acetyltransferase ausP, which spontaneously changes to dehydroaustin. The cytochrome P450 monooxygenase ausR then converts dehydroaustin is into 7-dehydrodehydroaustin. The hydroxylation catalyzed by ausR permits the O-acetyltransferase ausQ to add an additional acetyl group to the molecule, leading to the formation of acetoxydehydroaustin. The short chain dehydrogenase ausT catalyzes the reduction of the double bond present between carbon atoms 1 and 2 to convert 7-dehydrodehydroaustin into 1,2-dihydro-7-hydroxydehydroaustin. AusQ catalyzes not only an acetylation reaction but also the addition of the PKS ausV diketide product to 1,2-dihydro-7-hydroxydehydroaustin, forming precalidodehydroaustin. Finally, the iron/alpha-ketoglutarate-dependent dioxygenase converts precalidodehydroaustin into calidodehydroaustin. The sequence is that of FAD-binding monooxygenase ausC from Aspergillus calidoustus.